The following is a 297-amino-acid chain: ER membrane protein complex subunit 2 (297 aa).

Position 2 is an N-acetylalanine (Ala-2). 3 TPR repeats span residues 87-120, 155-188, and 192-225; these read HRVKRLTGMRFEAMERYDDAIQLYDRILQEDPTN, QEAWHELAELYINEHDYAKAAFCLEELMMTNPHN, and CQQYAEVKYTQGGLENLELSRKYFAQALKLNNRN. Lys-255 carries the post-translational modification N6-acetyllysine.

This sequence belongs to the EMC2 family. As to quaternary structure, component of the ER membrane protein complex (EMC). Interacts with WNK1 (via amphipathic alpha-helix region); promoting the ER membrane protein complex assembly by preventing EMC2 ubiquitination. In terms of processing, ubiquitinated when soluble in the cytoplasm, leading to its degradation by the proteasome. Interaction with EMC2 prevents its ubiquitination and degradation.

It localises to the endoplasmic reticulum membrane. Part of the endoplasmic reticulum membrane protein complex (EMC) that enables the energy-independent insertion into endoplasmic reticulum membranes of newly synthesized membrane proteins. Preferentially accommodates proteins with transmembrane domains that are weakly hydrophobic or contain destabilizing features such as charged and aromatic residues. Involved in the cotranslational insertion of multi-pass membrane proteins in which stop-transfer membrane-anchor sequences become ER membrane spanning helices. It is also required for the post-translational insertion of tail-anchored/TA proteins in endoplasmic reticulum membranes. By mediating the proper cotranslational insertion of N-terminal transmembrane domains in an N-exo topology, with translocated N-terminus in the lumen of the ER, controls the topology of multi-pass membrane proteins like the G protein-coupled receptors. By regulating the insertion of various proteins in membranes, it is indirectly involved in many cellular processes. This chain is ER membrane protein complex subunit 2, found in Pongo abelii (Sumatran orangutan).